Consider the following 94-residue polypeptide: Small polypeptide ROTUNDIFOLIA LIKE 1 (94 aa).

Positions 1–13 (MRQCASASSSTSR) are enriched in polar residues. The disordered stretch occupies residues 1–26 (MRQCASASSSTSRPPEAAGEEGKRRR). Positions 28-59 (RRGWLLQAAAREQRSRFYIFRRCVAMLLCWYK) are required for DVL/RTFL small polypeptide activity. Residues 63–82 (ITPYNVVPLGIYGLVWFATM) traverse the membrane as a helical segment.

This sequence belongs to the DVL/RTFL small polypeptides family.

The protein localises to the cell membrane. Its function is as follows. Small polypeptide acting as a regulatory molecule which coordinates cellular responses required for differentiation, growth and development, probably by restricting polar cell proliferation in lateral organs. This Oryza sativa subsp. japonica (Rice) protein is Small polypeptide ROTUNDIFOLIA LIKE 1.